The sequence spans 144 residues: Transcription antitermination protein NusB (144 aa).

This sequence belongs to the NusB family.

Involved in transcription antitermination. Required for transcription of ribosomal RNA (rRNA) genes. Binds specifically to the boxA antiterminator sequence of the ribosomal RNA (rrn) operons. This is Transcription antitermination protein NusB from Histophilus somni (strain 129Pt) (Haemophilus somnus).